A 149-amino-acid polypeptide reads, in one-letter code: Glutamate mutase sigma subunit (149 aa).

One can recognise a B12-binding domain in the interval Lys3–Val140. Adenosylcob(III)alamin-binding positions include Ala13–Ala17, His16, Ser61–Ile63, and Asn93–Gly97.

The protein belongs to the methylaspartate mutase GlmS subunit family. As to quaternary structure, heterotetramer composed of 2 epsilon subunits (GlmE) and 2 sigma subunits (GlmS). GlmE exists as a homodimer and GlmS as a monomer. Adenosylcob(III)alamin is required as a cofactor.

It carries out the reaction (2S,3S)-3-methyl-L-aspartate = L-glutamate. The protein operates within amino-acid degradation; L-glutamate degradation via mesaconate pathway; acetate and pyruvate from L-glutamate: step 1/4. In terms of biological role, catalyzes the carbon skeleton rearrangement of L-glutamate to L-threo-3-methylaspartate ((2S,3S)-3-methylaspartate). The polypeptide is Glutamate mutase sigma subunit (Escherichia coli O157:H7).